The chain runs to 718 residues: Polyribonucleotide nucleotidyltransferase (718 aa).

Residues aspartate 496 and aspartate 502 each contribute to the Mg(2+) site. Positions 563-622 constitute a KH domain; sequence PRLLTIKIDPDMIGLVIGPGGKTIKGITEETGAKIDIEDDGTVTISAVDENKAKRARNIV. In terms of domain architecture, S1 motif spans 632-700; sequence GDVYAGRVTR…NKGRINLTRL (69 aa).

In terms of assembly, may form homodimers or higher order multimers. Interacts with RNase E (rne). It depends on Mg(2+) as a cofactor.

It is found in the cytoplasm. The enzyme catalyses RNA(n+1) + phosphate = RNA(n) + a ribonucleoside 5'-diphosphate. Involved in mRNA degradation. Catalyzes the phosphorolysis of single-stranded polyribonucleotides processively in the 3'- to 5'-direction. This chain is Polyribonucleotide nucleotidyltransferase, found in Nostoc sp. (strain PCC 7120 / SAG 25.82 / UTEX 2576).